Here is a 346-residue protein sequence, read N- to C-terminus: Phosphate acyltransferase (346 aa).

Belongs to the PlsX family. As to quaternary structure, homodimer. Probably interacts with PlsY.

Its subcellular location is the cytoplasm. It carries out the reaction a fatty acyl-[ACP] + phosphate = an acyl phosphate + holo-[ACP]. It participates in lipid metabolism; phospholipid metabolism. Catalyzes the reversible formation of acyl-phosphate (acyl-PO(4)) from acyl-[acyl-carrier-protein] (acyl-ACP). This enzyme utilizes acyl-ACP as fatty acyl donor, but not acyl-CoA. The polypeptide is Phosphate acyltransferase (Geotalea daltonii (strain DSM 22248 / JCM 15807 / FRC-32) (Geobacter daltonii)).